A 155-amino-acid polypeptide reads, in one-letter code: Phytohormone-binding protein CSBP (155 aa).

Residues Leu22, Gln67, Glu69, and 139-142 (TLMY) each bind trans-zeatin. Gln67 contributes to the gibberellin A3 binding site. Position 139 (Thr139) interacts with gibberellin A3.

It belongs to the BetVI family. In terms of assembly, monomer.

Binds the cytokinin trans-zeatin in vitro. Binds gibberellin A3 (GA3) in vitro. In Vigna radiata var. radiata (Mung bean), this protein is Phytohormone-binding protein CSBP.